A 423-amino-acid chain; its full sequence is LysM domain-containing GPI-anchored protein 3 (423 aa).

The N-terminal stretch at 1–24 (MKNPEKPLLLFLILASSLASMATA) is a signal peptide. 4 cysteine pairs are disulfide-bonded: C31–C97, C37–C160, C95–C158, and C97–C160. A LysM 1 domain is found at 107 to 154 (THYKTRTSDTLGSIADSVYGGLVSPEQIQVANSETDLSVLDVGTKLVI). N162 is a glycosylation site (N-linked (GlcNAc...) asparagine). The 44-residue stretch at 173–216 (LSYVVRGIDTMAGIAKRFSTSVTDLTNVNAMGAPDINPGDILAV) folds into the LysM 2 domain. Disulfide bonds link C221/C253 and C248/C276. A glycan (N-linked (GlcNAc...) asparagine) is linked at N238. N285 carries N-linked (GlcNAc...) asparagine glycosylation. Residue G394 is the site of GPI-anchor amidated glycine attachment. A propeptide spans 395–423 (GSISIASCPLSYYSFIALLIPIGSCFFVF) (removed in mature form).

In terms of assembly, interacts with peptidoglycans.

Its subcellular location is the cell membrane. Its function is as follows. Required as a cell surface receptor for peptidoglycan (PGN) elicitor signaling leading to innate immunity. Plays an essential role in detecting PGNs and restricting bacterial growth (of Pseudomonas syringae pv. tomato DC3000 for example). The polypeptide is LysM domain-containing GPI-anchored protein 3 (LYM3) (Arabidopsis thaliana (Mouse-ear cress)).